A 229-amino-acid polypeptide reads, in one-letter code: Endo-1,4-beta-xylanase 1 (229 aa).

A signal peptide spans 1–19 (MVAFSSLICALTSIASTLA). The propeptide occupies 20–51 (MPTGLEPESSVNVTERGMYDFVLGAHNDHRRR). A glycan (N-linked (GlcNAc...) asparagine) is linked at N31. In terms of domain architecture, GH11 spans 42 to 228 (LGAHNDHRRR…GSGSASQSVS (187 aa)). Substrate is bound at residue Y117. Residue E126 is the Nucleophile of the active site. Y128, R160, P164, Q174, and Y209 together coordinate substrate. Catalysis depends on E215, which acts as the Proton donor.

It belongs to the glycosyl hydrolase 11 (cellulase G) family.

It localises to the secreted. It carries out the reaction Endohydrolysis of (1-&gt;4)-beta-D-xylosidic linkages in xylans.. The protein operates within glycan degradation; xylan degradation. In terms of biological role, glycoside hydrolase involved in the hydrolysis of xylan, a major plant cell wall hemicellulose made up of 1,4-beta-linked D-xylopyranose residues. Catalyzes the endohydrolysis of the main-chain 1,4-beta-glycosidic bonds connecting the xylose subunits yielding various xylooligosaccharides and xylose. The chain is Endo-1,4-beta-xylanase 1 from Hypocrea jecorina (strain QM6a) (Trichoderma reesei).